We begin with the raw amino-acid sequence, 975 residues long: MTTINIGTIPVVINQNADTQMGEGTKNIFPIVKDFVDPFADLEMRCAERVKRMGELCFSKKGRYITMIPKPDYIKAREKEQREEELNFQNSEHVLNSLDTTCTPEHHSSRNNGMQVSFKTQHYKRTFRKPRIQAKKRDLKGQHTIHYVAKELLSIVKKRDMVLEVVDKRKHANFATFRRYGKTYGMHITLNHMVRKRRRVDVTLNKLMTEIAMHCAIPFECLNTLTLRKGHSGLVLQTETVPNVHKIKSKITIVRGVVNEGNIPVLIDARKKLSGRDMSTIREFSAGDLFWKGYNQTFIDNRPTDLNHQCTSDLNVTQCGSVMALLTLALFPCGRITCKKCVENFLNQNNKERFNNASVFINQVIQLLEKGFSEFKHSKEILLMFKERLQMENPATDQCMEIAKATAALPEAPFSHIKEINNVLLKYGSLSNEEVGGASKHLLEVVRYIRNRTDSIQRNDLSKFRNKISSKTHINLDLMCDNQLDKNANFVWGQRAYHAKRFLSNYFNEINPSEGYDKFIFRKLPNGARELAIGRLIMPTNFEAFREQMKGKMIDNGPIGKDCVSRMRGSFCYPCCCTTDDVGTAVISDFKMPTKYHLVLGGNDLAKYIKLPTDTTGNMYIAKDGFCHINIFFAMLVNVSEEKSKDFTKMVRDQIMPKLGEWPTMMDVATACWQLTVWFPDTLSAELPRILVDHKLGIMHVLDSYGSISAGYHVLKANIVSQLIKFASDDLESELKYYRVGGDCNFGSRVRIDTKFLLKSIYRPDLLERIIEHEPFVLVLAMQSPAVLLALFNSASLEKAVQYWMHREMQVSHIMTLLAVLASNVSASKLLTTQFEIIEASAPQILAEMDKVHLPMHSIHSANVFLMNMSESRETDKTIDELGFYSFKKSSRILMEKNLNGGFGGAMARIRIVGTVVFNKAVVASASKIFKLCNPTRRARYKRQVHNLTQVIRGSDKTTVTCSEGSGCPFCRKED.

The Peptidase S30 domain occupies 139 to 284 (LKGQHTIHYV…GRDMSTIREF (146 aa)). Active-site for P1 proteinase activity residues include His-192, Asp-201, and Ser-232. Residues 335–338 (RITC) carry the Involved in interaction with stylet and aphid transmission motif. The short motif at 593–595 (PTK) is the Involved in virions binding and aphid transmission element. Residues 619–741 (MYIAKDGFCH…ESELKYYRVG (123 aa)) form the Peptidase C6 domain. Active-site for helper component proteinase activity residues include Cys-627 and His-700.

This sequence belongs to the potyviridae P3N-PIPO polyprotein family. As to quaternary structure, interacts (via PIPO domain) with host PCaP1 protein; this interaction may help to anchor the movement complex to the plasma membrane from which the complex could move to the plasmodesmata. Potyviral RNA is expressed as two polyproteins which undergo post-translational proteolytic processing. Genome polyprotein is processed by NIa-pro, P1 and HC-pro proteinases resulting in the production of at least ten individual proteins. P3N-PIPO is cleaved by P1 and HC-pro proteinases resulting in the production of three individual proteins. The P1 proteinase and the HC-pro cleave only their respective C-termini autocatalytically.

It localises to the host cell junction. The protein resides in the host plasmodesma. It catalyses the reaction Hydrolyzes a Gly-|-Gly bond at its own C-terminus, commonly in the sequence -Tyr-Xaa-Val-Gly-|-Gly, in the processing of the potyviral polyprotein.. In terms of biological role, required for aphid transmission and also has proteolytic activity. Only cleaves a Gly-Gly dipeptide at its own C-terminus. Interacts with virions and aphid stylets. Acts as a suppressor of RNA-mediated gene silencing, also known as post-transcriptional gene silencing (PTGS), a mechanism of plant viral defense that limits the accumulation of viral RNAs. May have RNA-binding activity. Functionally, allows efficient cell to cell propagation, by bypassing the host cell wall barrier. Transports viral genome to neighboring plant cells directly through plasmosdesmata, without any budding. This chain is P3N-PIPO polyprotein, found in Arachis hypogaea (Peanut).